A 175-amino-acid chain; its full sequence is Translation initiation factor IF-3 (175 aa).

The protein belongs to the IF-3 family. Monomer.

It is found in the cytoplasm. IF-3 binds to the 30S ribosomal subunit and shifts the equilibrium between 70S ribosomes and their 50S and 30S subunits in favor of the free subunits, thus enhancing the availability of 30S subunits on which protein synthesis initiation begins. In Staphylococcus epidermidis (strain ATCC 35984 / DSM 28319 / BCRC 17069 / CCUG 31568 / BM 3577 / RP62A), this protein is Translation initiation factor IF-3.